A 670-amino-acid chain; its full sequence is Sodium/potassium/calcium exchanger 2 (670 aa).

Topologically, residues 1 to 38 (MDLHQSATVRLLQEWCSHESPSGCRRHYNTRKKLKLIR) are cytoplasmic. The helical transmembrane segment at 39–59 (VIGLVMGLVAVSTVPFSISAF) threads the bilayer. Over 60–133 (TETYSQNNRG…DVFSLEERRK (74 aa)) the chain is Extracellular. Disordered stretches follow at residues 67 to 86 (NRGE…HRQR) and 91 to 122 (LNDK…GDYP). The segment covering 106–122 (QEDRSENGTDHAQGDYP) has biased composition (basic and acidic residues). Asn-112 is a glycosylation site (N-linked (GlcNAc...) asparagine). Residues 134 to 154 (GAIILHVIGMIYMFIALAIVC) traverse the membrane as a helical segment. The Cytoplasmic segment spans residues 155–179 (DEFFVPSLTVITEKLGISDDVAGAT). An Alpha-1 repeat occupies 175–215 (VAGATFMAAGGSAPELFTSLIGVFIAHSNVGIGTIVGSAVF). A helical membrane pass occupies residues 180–200 (FMAAGGSAPELFTSLIGVFIA). Residues 201-205 (HSNVG) lie on the Extracellular side of the membrane. Residues 206-226 (IGTIVGSAVFNILFVIGMCAL) traverse the membrane as a helical segment. Topologically, residues 227–244 (FSREILNLTWWPLFRDVS) are cytoplasmic. The chain crosses the membrane as a helical span at residues 245-265 (FYIVDLIMLIIFFLDNVIMWW). Position 266 (Glu-266) is a topological domain, extracellular. Residues 267–287 (SLLLLTAYFAYVVFMKFNVQV) form a helical membrane-spanning segment. Topologically, residues 288–506 (ERWVKQMINR…PDVRKPASKK (219 aa)) are cytoplasmic. The tract at residues 312-335 (ASTAGDKEEPTLPNKPRLQRGGSS) is disordered. Phosphoserine occurs at positions 337 and 341. 2 disordered regions span residues 394-414 (KCQV…DYAA) and 450-471 (AADA…LSLS). A helical membrane pass occupies residues 507–527 (FFPITFFGSITWIAVFSYLMV). At 528 to 542 (WWAHQVGETIGISEE) the chain is on the extracellular side. A helical transmembrane segment spans residues 543-563 (IMGLTILAAGTSIPDLITSVI). One copy of the Alpha-2 repeat lies at 550 to 581 (AAGTSIPDLITSVIVARKGLGDMAVSSSVGSN). The Cytoplasmic segment spans residues 564–578 (VARKGLGDMAVSSSV). Residues 579-599 (GSNIFDITVGLPLPWLLYTII) traverse the membrane as a helical segment. Residues 600-611 (HRFKPVTVSSNG) lie on the Extracellular side of the membrane. A helical membrane pass occupies residues 612–632 (LFCAIVLLFIMLIFVILSIAL). Residues 633–639 (CKWRMNK) are Cytoplasmic-facing. The chain crosses the membrane as a helical span at residues 640–660 (ILGFIMFGLYFAFLVVSVLLE). Topologically, residues 661–670 (DKVLECPVSI) are extracellular.

It belongs to the Ca(2+):cation antiporter (CaCA) (TC 2.A.19) family. SLC24A subfamily. In terms of tissue distribution, expressed abundantly in all regions of the brain and weakly in the eye, large intestine and adrenal tissue.

The protein resides in the cell membrane. It carries out the reaction Ca(2+)(out) + K(+)(out) + 4 Na(+)(in) = Ca(2+)(in) + K(+)(in) + 4 Na(+)(out). Functionally, calcium, potassium:sodium antiporter that transports 1 Ca(2+) and 1 K(+) in exchange for 4 Na(+). Required for learming and memory by regulating neuronal Ca(2+), which is essential for the development of synaptic plasticity. This chain is Sodium/potassium/calcium exchanger 2 (Slc24a2), found in Rattus norvegicus (Rat).